The primary structure comprises 147 residues: Large ribosomal subunit protein uL13 (147 aa).

The tract at residues 126-147 is disordered; sequence GGPEHPHAAQNPQPYEITQIAQ.

Belongs to the universal ribosomal protein uL13 family. In terms of assembly, part of the 50S ribosomal subunit.

In terms of biological role, this protein is one of the early assembly proteins of the 50S ribosomal subunit, although it is not seen to bind rRNA by itself. It is important during the early stages of 50S assembly. The sequence is that of Large ribosomal subunit protein uL13 from Cutibacterium acnes (strain DSM 16379 / KPA171202) (Propionibacterium acnes).